The following is a 504-amino-acid chain: Cytoplasmic dynein 1 light intermediate chain 1 (504 aa).

35–42 (GDPTSGKS) provides a ligand contact to ATP. Composition is skewed to low complexity over residues 167-189 (TTTA…TNKT), 392-425 (NSPS…NTPL), and 437-446 (SSNNPVAASP). Disordered regions lie at residues 167-195 (TTTA…TTDK), 383-446 (LDND…AASP), and 464-504 (DKTS…QQKK). Positions 464–473 (DKTSSRKDLK) are enriched in basic and acidic residues. A compositionally biased stretch (polar residues) spans 475–487 (SLASPPTTSVSSN). The segment covering 488–504 (AREDAKKELDKLKQQKK) has biased composition (basic and acidic residues).

The protein belongs to the dynein light intermediate chain family. As to quaternary structure, homodimer. The cytoplasmic dynein 1 complex consists of two catalytic heavy chains (HCs) and a number of non-catalytic subunits presented by intermediate chains (ICs), light intermediate chains (LICs) and light chains (LCs).

It localises to the cytoplasm. The protein localises to the cytoskeleton. Functionally, acts as one of several non-catalytic accessory components of the cytoplasmic dynein 1 complex that are thought to be involved in linking dynein to cargos and to adapter proteins that regulate dynein function. Cytoplasmic dynein 1 acts as a motor for the intracellular retrograde motility of vesicles and organelles along microtubules. May play a role in binding dynein to membranous organelles or chromosomes. The sequence is that of Cytoplasmic dynein 1 light intermediate chain 1 (dync1li1) from Dictyostelium discoideum (Social amoeba).